The sequence spans 1310 residues: Contactin-associated protein-like 4 (1310 aa).

Positions 1–27 are cleaved as a signal peptide; that stretch reads MNMGSVAGAVLKMLLLLSTQNWNRVEA. Topologically, residues 28–1243 are extracellular; that stretch reads GNSYDCDEPL…LTHAIKSDSA (1216 aa). One can recognise an F5/8 type C domain in the interval 33–179; that stretch reads CDEPLVSALP…IGMRIEVFGC (147 aa). Cys33 and Cys179 form a disulfide bridge. In terms of domain architecture, Laminin G-like 1 spans 214 to 346; that stretch reads FKTMESDGIL…NLFYNGVDVI (133 aa). N-linked (GlcNAc...) asparagine glycosylation is found at Asn262, Asn287, and Asn361. 4 cysteine pairs are disulfide-bonded: Cys334–Cys366, Cys517–Cys549, Cys555–Cys566, and Cys560–Cys575. The 130-residue stretch at 400–529 folds into the Laminin G-like 2 domain; it reads FRTWNKAGLL…LISINNKMVD (130 aa). A glycan (N-linked (GlcNAc...) asparagine) is linked at Asn540. The 38-residue stretch at 551-588 folds into the EGF-like 1 domain; sequence ISDRCLPNSCEHGGECSQSWSTFHCNCTNTGYTGATCH. Residue Asn576 is glycosylated (N-linked (GlcNAc...) asparagine). Cys577 and Cys587 are oxidised to a cystine. In terms of domain architecture, Fibrinogen C-terminal spans 589-794; the sequence is SSVYEQSCEA…LLCRGDRPFW (206 aa). N-linked (GlcNAc...) asparagine glycans are attached at residues Asn604, Asn627, Asn639, Asn708, and Asn750. The region spanning 795–960 is the Laminin G-like 3 domain; sequence NAASFNTEAS…TVTPGVQPGC (166 aa). 4 cysteine pairs are disulfide-bonded: Cys933–Cys960, Cys964–Cys977, Cys971–Cys986, and Cys988–Cys998. The EGF-like 2 domain maps to 960 to 999; sequence CRGHCGSYGKLCRHGGKCREKPSGFFCDCSSSAYAGPFCS. Residues Asn1019, Asn1025, and Asn1075 are each glycosylated (N-linked (GlcNAc...) asparagine). In terms of domain architecture, Laminin G-like 4 spans 1048 to 1204; sequence FRTTRAPSLL…VTGHVTESSC (157 aa). The cysteines at positions 1169 and 1204 are disulfide-linked. Residues 1244–1264 traverse the membrane as a helical segment; that stretch reads VIGGLIAVVIFILLCVSAIAV. Over 1265–1310 the chain is Cytoplasmic; that stretch reads RIYQQKRLYKRNEAKRSENVDSAEAVLKSELHIQNAVGENQKEYFF.

This sequence belongs to the neurexin family. As to quaternary structure, interacts with TIAM1. Specifically present in developing cortical interneurons: highly expressed in cortical parvalbumin (PV) cells and midbrain dopaminergic neurons and is localized presynaptically (at protein level). Also present in the substantia nigra pars compacta (SnC) and ventral tegmental area (VTA) midbrain dopaminergic projection populations.

Its subcellular location is the presynaptic cell membrane. Presynaptic protein involved in both dopaminergic synaptic transmission and GABAergic system, thereby participating in the structural maturation of inhibitory interneuron synapses. Involved in the dopaminergic synaptic transmission by attenuating dopamine release through a presynaptic mechanism. Also participates in the GABAergic system. The protein is Contactin-associated protein-like 4 (Cntnap4) of Mus musculus (Mouse).